The primary structure comprises 149 residues: SsrA-binding protein (149 aa).

It belongs to the SmpB family.

Its subcellular location is the cytoplasm. Its function is as follows. Required for rescue of stalled ribosomes mediated by trans-translation. Binds to transfer-messenger RNA (tmRNA), required for stable association of tmRNA with ribosomes. tmRNA and SmpB together mimic tRNA shape, replacing the anticodon stem-loop with SmpB. tmRNA is encoded by the ssrA gene; the 2 termini fold to resemble tRNA(Ala) and it encodes a 'tag peptide', a short internal open reading frame. During trans-translation Ala-aminoacylated tmRNA acts like a tRNA, entering the A-site of stalled ribosomes, displacing the stalled mRNA. The ribosome then switches to translate the ORF on the tmRNA; the nascent peptide is terminated with the 'tag peptide' encoded by the tmRNA and targeted for degradation. The ribosome is freed to recommence translation, which seems to be the essential function of trans-translation. In Anaplasma marginale (strain St. Maries), this protein is SsrA-binding protein.